Consider the following 444-residue polypeptide: Phosphoglucosamine mutase (444 aa).

Catalysis depends on S100, which acts as the Phosphoserine intermediate. Residues S100, D234, D236, and D238 each contribute to the Mg(2+) site. Residue S100 is modified to Phosphoserine.

This sequence belongs to the phosphohexose mutase family. It depends on Mg(2+) as a cofactor. Activated by phosphorylation.

The enzyme catalyses alpha-D-glucosamine 1-phosphate = D-glucosamine 6-phosphate. Its function is as follows. Catalyzes the conversion of glucosamine-6-phosphate to glucosamine-1-phosphate. The chain is Phosphoglucosamine mutase from Rubrobacter xylanophilus (strain DSM 9941 / JCM 11954 / NBRC 16129 / PRD-1).